A 359-amino-acid polypeptide reads, in one-letter code: 4-galactosyl-N-acetylglucosaminide 3-alpha-L-fucosyltransferase FUT6 (359 aa).

Over 1-14 (MDPLGPAKPQWSWR) the chain is Cytoplasmic. The chain crosses the membrane as a helical; Signal-anchor for type II membrane protein span at residues 15 to 34 (CCLTTLLFQLLVAVCFFSYL). The Lumenal portion of the chain corresponds to 35–359 (RVSRDDPTVY…QTRSIAAWFT (325 aa)). Residues Asn-46, Asn-91, Asn-153, and Asn-184 are each glycosylated (N-linked (GlcNAc...) asparagine). The tract at residues 73–112 (KPIALPRCSEMVPGTADCNITADRKVYPQADAVIVHHREV) is determines site-specific fucosylation.

Belongs to the glycosyltransferase 10 family. As to quaternary structure, homodimer and monomer. Monomer (secreted form). In terms of processing, N-glycosylated. Post-translationally, proteolytic cleavage releases a secreted glycoform of 43 kDa.

It localises to the golgi apparatus. It is found in the golgi stack membrane. Its subcellular location is the secreted. The enzyme catalyses a beta-D-galactosyl-(1-&gt;4)-N-acetyl-beta-D-glucosaminyl derivative + GDP-beta-L-fucose = a beta-D-galactosyl-(1-&gt;4)-[alpha-L-fucosyl-(1-&gt;3)]-N-acetyl-beta-D-glucosaminyl derivative + GDP + H(+). It catalyses the reaction an N-acetyl-alpha-neuraminyl-(2-&gt;3)-beta-D-galactosyl-(1-&gt;4)-N-acetyl-beta-D-glucosaminyl derivative + GDP-beta-L-fucose = an alpha-Neu5Ac-(2-&gt;3)-beta-D-Gal-(1-&gt;4)-[alpha-L-Fuc-(1-&gt;3)]-beta-D-GlcNAc derivative + GDP + H(+). It carries out the reaction an alpha-Neu5Ac-(2-&gt;3)-beta-D-Gal-(1-&gt;4)-beta-D-GlcNAc-(1-&gt;3)-beta-D-Gal-(1-&gt;4)-[alpha-L-Fuc-(1-&gt;3)]-beta-D-GlcNAc derivative + GDP-beta-L-fucose = an alpha-Neu5Ac-(2-&gt;3)-beta-D-Gal-(1-&gt;4)-[alpha-L-Fuc-(1-&gt;3)]-beta-D-GlcNAc-(1-&gt;3)-beta-D-Gal-(1-&gt;4)-[alpha-L-Fuc-(1-&gt;3)]-beta-D-GlcNAc derivative + GDP + H(+). The catalysed reaction is a neolactoside nLc6Cer + GDP-beta-L-fucose = beta-D-Gal-(1-&gt;4)-[alpha-L-Fuc-(1-&gt;3)]-beta-D-GlcNAc-(1-&gt;3)-beta-D-Gal-(1-&gt;4)-beta-D-GlcNAc-(1-&gt;3)-beta-D-Gal-(1-&gt;4)-beta-D-Glc-(1&lt;-&gt;1')-Cer + GDP + H(+). The enzyme catalyses a neolactoside nLc6Cer + GDP-beta-L-fucose = beta-D-galactosyl-(1-&gt;4)-N-acetyl-beta-D-glucosaminyl-(1-&gt;3)-beta-D-galactosyl-(1-&gt;4)-[alpha-L-fucosyl-(1-&gt;3)]-N-acetyl-beta-D-glucosaminyl-(1-&gt;3)-beta-D-galactosyl-(1-&gt;4)-beta-D-glucosyl-(1&lt;-&gt;1')-ceramide + GDP + H(+). It catalyses the reaction a neolactoside VI(3)-alpha-NeuNAc-nLc6Cer + GDP-beta-L-fucose = a neolactoside VI(3)-alpha-NeuAc,V(3)-alphaFuc-nLc6Cer + GDP + H(+). It carries out the reaction beta-D-galactosyl-(1-&gt;4)-N-acetyl-D-glucosamine + GDP-beta-L-fucose = beta-D-galactosyl-(1-&gt;4)-[alpha-L-fucosyl-(1-&gt;3)]-N-acetyl-D-glucosamine + GDP + H(+). The catalysed reaction is N-acetyl-alpha-neuraminosyl-(2-&gt;3)-beta-D-galactosyl-(1-&gt;4)-N-acetyl-beta-D-glucosamine + GDP-beta-L-fucose = N-acetyl-alpha-neuraminosyl-(2-&gt;3)-beta-D-galactosyl-(1-&gt;4)-[alpha-L-fucosyl-(1-&gt;3)]-N-acetyl-beta-D-glucosamine + GDP + H(+). The enzyme catalyses lactose + GDP-beta-L-fucose = beta-D-galactosyl-(1-&gt;4)-[alpha-L-fucosyl-(1-&gt;3)]-D-glucose + GDP + H(+). It catalyses the reaction alpha-L-Fuc-(1-&gt;2)-beta-D-Gal-(1-&gt;4)-D-Glc + GDP-beta-L-fucose = alpha-L-Fuc-(1-&gt;2)-beta-D-Gal-(1-&gt;4)-[alpha-L-Fuc-(1-&gt;3)]-D-Glc + GDP + H(+). It carries out the reaction a beta-D-galactosyl-(1-&gt;4)-N-acetyl-beta-D-6-sulfooxy-glucosaminyl derivative + GDP-beta-L-fucose = a beta-D-galactosyl-(1-&gt;4)-[alpha-L-fucosyl-(1-&gt;3)]-N-acetyl-beta-D-6-sulfooxy-glucosaminyl derivative + GDP + H(+). It participates in protein modification; protein glycosylation. Catalyzes the transfer of L-fucose, from a guanosine diphosphate-beta-L-fucose, to the N-acetyl glucosamine (GlcNAc) of a distal alpha2,3 sialylated lactosamine unit of a glycoprotein- or glycolipid-linked sialopolylactosamines chain or of a distal or internal lactosamine unit of a neutral glycoprotein- or glycolipid-linked polylactosamines chain through an alpha-1,3 glycosidic linkage and participates in surface expression of the sialyl Lewis X (sLe(x)), Lewis X (Le(x)) and non sialylated VIM2 determinants. Moreover transfers fucose to H-type 2 (Fucalpha1-2Galbeta1-4GlcNAc) chain acceptor substrates and participates in difucosylated sialyl Lewis x determinants. Also fucosylates a polylactosamine substrate having a 6 sulfate modification at the GlcNAc moiety and gives rise to sialyl and non-sialyl 6-sulfo lewis X. Does not have activity towards type 1 ((Galbeta1-3GlcNAc)) and H-type 1 chain (Fucalpha1-2Galbeta1-3GlcNAc) acceptors substrates. In Pan troglodytes (Chimpanzee), this protein is 4-galactosyl-N-acetylglucosaminide 3-alpha-L-fucosyltransferase FUT6.